Here is a 55-residue protein sequence, read N- to C-terminus: Large ribosomal subunit protein bL33 (55 aa).

It belongs to the bacterial ribosomal protein bL33 family.

The sequence is that of Large ribosomal subunit protein bL33 from Jannaschia sp. (strain CCS1).